A 229-amino-acid polypeptide reads, in one-letter code: Large ribosomal subunit protein uL1 (229 aa).

It belongs to the universal ribosomal protein uL1 family. In terms of assembly, part of the 50S ribosomal subunit.

Binds directly to 23S rRNA. The L1 stalk is quite mobile in the ribosome, and is involved in E site tRNA release. Its function is as follows. Protein L1 is also a translational repressor protein, it controls the translation of the L11 operon by binding to its mRNA. This is Large ribosomal subunit protein uL1 from Lacticaseibacillus casei (strain BL23) (Lactobacillus casei).